Consider the following 473-residue polypeptide: UDP-N-acetylmuramate--L-alanine ligase (473 aa).

112–118 contributes to the ATP binding site; sequence GTHGKTT.

The protein belongs to the MurCDEF family.

The protein resides in the cytoplasm. It catalyses the reaction UDP-N-acetyl-alpha-D-muramate + L-alanine + ATP = UDP-N-acetyl-alpha-D-muramoyl-L-alanine + ADP + phosphate + H(+). Its pathway is cell wall biogenesis; peptidoglycan biosynthesis. In terms of biological role, cell wall formation. The protein is UDP-N-acetylmuramate--L-alanine ligase of Nitrosomonas eutropha (strain DSM 101675 / C91 / Nm57).